The primary structure comprises 489 residues: Probable cytosol aminopeptidase (489 aa).

K255 and D260 together coordinate Mn(2+). Residue K267 is part of the active site. Mn(2+)-binding residues include D279, D339, and E341. The active site involves R343.

Belongs to the peptidase M17 family. It depends on Mn(2+) as a cofactor.

It localises to the cytoplasm. The catalysed reaction is Release of an N-terminal amino acid, Xaa-|-Yaa-, in which Xaa is preferably Leu, but may be other amino acids including Pro although not Arg or Lys, and Yaa may be Pro. Amino acid amides and methyl esters are also readily hydrolyzed, but rates on arylamides are exceedingly low.. It catalyses the reaction Release of an N-terminal amino acid, preferentially leucine, but not glutamic or aspartic acids.. Its function is as follows. Presumably involved in the processing and regular turnover of intracellular proteins. Catalyzes the removal of unsubstituted N-terminal amino acids from various peptides. In Synechococcus sp. (strain CC9605), this protein is Probable cytosol aminopeptidase.